A 688-amino-acid chain; its full sequence is Zinc finger CCCH domain-containing protein 22 (688 aa).

The tract at residues 62-123 (ALLPPPPPPS…QPFSRSNGSV (62 aa)) is disordered. A compositionally biased stretch (low complexity) spans 101–117 (PLSASSPSSWAQAQPFS). The segment at 233–260 (GFGWKPCLYYARGFCKNGSSCRFVHGDD) adopts a C3H1-type zinc-finger fold. The RRM domain occupies 366-442 (RQIYLTFPAD…RVLVKPYKEK (77 aa)). A coiled-coil region spans residues 487-522 (TNEMMLRRKLEEQQQAAELQQAIELHSRRLMDLQLL). Positions 552-624 (LATTMVESPP…PTKSSVSAHQ (73 aa)) are disordered. The segment covering 574–589 (TEERKMVNGGGDKEES) has biased composition (basic and acidic residues). The span at 613–624 (ASPTKSSVSAHQ) shows a compositional bias: polar residues.

This chain is Zinc finger CCCH domain-containing protein 22, found in Oryza sativa subsp. japonica (Rice).